The primary structure comprises 142 residues: Putative pre-16S rRNA nuclease (142 aa).

It belongs to the YqgF nuclease family.

It localises to the cytoplasm. In terms of biological role, could be a nuclease involved in processing of the 5'-end of pre-16S rRNA. This is Putative pre-16S rRNA nuclease from Chloroflexus aggregans (strain MD-66 / DSM 9485).